Consider the following 423-residue polypeptide: UDP-N-acetylglucosamine 1-carboxyvinyltransferase 2 (423 aa).

23–24 (KN) contributes to the phosphoenolpyruvate binding site. R96 lines the UDP-N-acetyl-alpha-D-glucosamine pocket. C120 serves as the catalytic Proton donor. A 2-(S-cysteinyl)pyruvic acid O-phosphothioketal modification is found at C120. UDP-N-acetyl-alpha-D-glucosamine is bound by residues 125-129 (RPIDL), D309, and V331.

Belongs to the EPSP synthase family. MurA subfamily.

The protein resides in the cytoplasm. It catalyses the reaction phosphoenolpyruvate + UDP-N-acetyl-alpha-D-glucosamine = UDP-N-acetyl-3-O-(1-carboxyvinyl)-alpha-D-glucosamine + phosphate. Its pathway is cell wall biogenesis; peptidoglycan biosynthesis. Its function is as follows. Cell wall formation. Adds enolpyruvyl to UDP-N-acetylglucosamine. The chain is UDP-N-acetylglucosamine 1-carboxyvinyltransferase 2 from Streptococcus agalactiae serotype Ia (strain ATCC 27591 / A909 / CDC SS700).